A 271-amino-acid chain; its full sequence is Mediator of RNA polymerase II transcription subunit 18 (271 aa).

Residues 89 to 119 (FGGNPSSSGDPDVSMSGLEEKPSSSSSSYSY) form a disordered region.

This sequence belongs to the Mediator complex subunit 18 family. Component of the Mediator complex.

Its subcellular location is the nucleus. Its function is as follows. Component of the Mediator complex, a coactivator involved in the regulated transcription of nearly all RNA polymerase II-dependent genes. Mediator functions as a bridge to convey information from gene-specific regulatory proteins to the basal RNA polymerase II transcription machinery. Mediator is recruited to promoters by direct interactions with regulatory proteins and serves as a scaffold for the assembly of a functional preinitiation complex with RNA polymerase II and the general transcription factors. The protein is Mediator of RNA polymerase II transcription subunit 18 (srb5) of Aspergillus niger (strain ATCC MYA-4892 / CBS 513.88 / FGSC A1513).